The chain runs to 31 residues: U14-ctenitoxin-Co1a (31 aa).

Disulfide bonds are present. Expressed by the venom gland.

Its subcellular location is the secreted. Omega-agatoxins are antagonists of voltage-gated calcium channels (Cav). The chain is U14-ctenitoxin-Co1a from Ctenus ornatus (Brazilian spider).